A 518-amino-acid chain; its full sequence is U-box domain-containing protein 57 (518 aa).

Residues 86–142 are a coiled coil; it reads EEVRKVHILEEEIVTLKHQADTYLVQKEKAVTAYDQLKHERDNAVQQVNELRDQSTH. Residues 159–409 form the Protein kinase domain; it reads FKNAREVGDT…RPDLLNEVWI (251 aa). Positions 434–508 constitute a U-box domain; it reads SVPAAFICPI…HGYLQQQQPN (75 aa).

It catalyses the reaction S-ubiquitinyl-[E2 ubiquitin-conjugating enzyme]-L-cysteine + [acceptor protein]-L-lysine = [E2 ubiquitin-conjugating enzyme]-L-cysteine + N(6)-ubiquitinyl-[acceptor protein]-L-lysine.. Its pathway is protein modification; protein ubiquitination. Functionally, possesses E3 ubiquitin-protein ligase in vitro. May be involved in cell death signaling. The protein is U-box domain-containing protein 57 (PUB57) of Oryza sativa subsp. japonica (Rice).